The primary structure comprises 449 residues: Methylenetetrahydrofolate--tRNA-(uracil-5-)-methyltransferase TrmFO (449 aa).

9–14 (GGGMAG) provides a ligand contact to FAD.

Belongs to the MnmG family. TrmFO subfamily. FAD is required as a cofactor.

Its subcellular location is the cytoplasm. The catalysed reaction is uridine(54) in tRNA + (6R)-5,10-methylene-5,6,7,8-tetrahydrofolate + NADH + H(+) = 5-methyluridine(54) in tRNA + (6S)-5,6,7,8-tetrahydrofolate + NAD(+). It catalyses the reaction uridine(54) in tRNA + (6R)-5,10-methylene-5,6,7,8-tetrahydrofolate + NADPH + H(+) = 5-methyluridine(54) in tRNA + (6S)-5,6,7,8-tetrahydrofolate + NADP(+). Catalyzes the folate-dependent formation of 5-methyl-uridine at position 54 (M-5-U54) in all tRNAs. This is Methylenetetrahydrofolate--tRNA-(uracil-5-)-methyltransferase TrmFO from Ruegeria pomeroyi (strain ATCC 700808 / DSM 15171 / DSS-3) (Silicibacter pomeroyi).